Consider the following 276-residue polypeptide: MLLRFTKMHGLGNDFMVLDLVSQHAHVQPKHVKLWGDRNTGIGFDQLLIVEAPSSPDVDFRYRIFNADGSEVEQCGNGARCFARFVQDKRLTVKKSIRVETKGGIIELNIRPDGQVTVDMGPPRLAPAEIPFQAEREALSYEIEVNGQRVELAAVSMGNPHGVLRVENVDSAPVHSLGPQLEVHPRFPKKANIGFLQVLDPHHARLRVWERGVGETQACGTGACAAAVAGIRQGWLQSPVQIDLPGGRLHIEWAGPGQPVMMTGPAVRVYEGQVRL.

Substrate contacts are provided by asparagine 13, glutamine 46, and asparagine 66. The Proton donor role is filled by cysteine 75. Residues 76–77 (GN), asparagine 159, asparagine 192, and 210–211 (ER) contribute to the substrate site. Cysteine 219 serves as the catalytic Proton acceptor. 220-221 (GT) is a substrate binding site.

This sequence belongs to the diaminopimelate epimerase family. As to quaternary structure, homodimer.

It is found in the cytoplasm. It catalyses the reaction (2S,6S)-2,6-diaminopimelate = meso-2,6-diaminopimelate. It participates in amino-acid biosynthesis; L-lysine biosynthesis via DAP pathway; DL-2,6-diaminopimelate from LL-2,6-diaminopimelate: step 1/1. Functionally, catalyzes the stereoinversion of LL-2,6-diaminopimelate (L,L-DAP) to meso-diaminopimelate (meso-DAP), a precursor of L-lysine and an essential component of the bacterial peptidoglycan. This is Diaminopimelate epimerase from Pseudomonas aeruginosa (strain LESB58).